We begin with the raw amino-acid sequence, 404 residues long: Histidine--tRNA ligase (404 aa).

It belongs to the class-II aminoacyl-tRNA synthetase family.

The protein localises to the cytoplasm. It carries out the reaction tRNA(His) + L-histidine + ATP = L-histidyl-tRNA(His) + AMP + diphosphate + H(+). The chain is Histidine--tRNA ligase from Nanoarchaeum equitans (strain Kin4-M).